Consider the following 243-residue polypeptide: ATP-dependent dethiobiotin synthetase BioD (243 aa).

12–17 (DVGKTL) is an ATP binding site. Mg(2+) is bound at residue threonine 16. Lysine 37 is a catalytic residue. Serine 41 is a substrate binding site. ATP contacts are provided by residues aspartate 54, 115–118 (EGCG), and 179–180 (NM). 2 residues coordinate Mg(2+): aspartate 54 and glutamate 115.

This sequence belongs to the dethiobiotin synthetase family. In terms of assembly, homodimer. Requires Mg(2+) as cofactor.

The protein localises to the cytoplasm. It catalyses the reaction (7R,8S)-7,8-diammoniononanoate + CO2 + ATP = (4R,5S)-dethiobiotin + ADP + phosphate + 3 H(+). Its pathway is cofactor biosynthesis; biotin biosynthesis; biotin from 7,8-diaminononanoate: step 1/2. Functionally, catalyzes a mechanistically unusual reaction, the ATP-dependent insertion of CO2 between the N7 and N8 nitrogen atoms of 7,8-diaminopelargonic acid (DAPA, also called 7,8-diammoniononanoate) to form a ureido ring. In Caldicellulosiruptor saccharolyticus (strain ATCC 43494 / DSM 8903 / Tp8T 6331), this protein is ATP-dependent dethiobiotin synthetase BioD.